The sequence spans 305 residues: Ornithine carbamoyltransferase (305 aa).

Carbamoyl phosphate-binding positions include 52-55 (STRT), Gln-79, Arg-103, and 130-133 (HPCQ). Residues Asn-161, Asp-222, and 226-227 (SM) each bind L-ornithine. Carbamoyl phosphate is bound by residues 262 to 263 (CL) and Arg-290.

Belongs to the aspartate/ornithine carbamoyltransferase superfamily. OTCase family.

Its subcellular location is the cytoplasm. The enzyme catalyses carbamoyl phosphate + L-ornithine = L-citrulline + phosphate + H(+). It participates in amino-acid biosynthesis; L-arginine biosynthesis; L-arginine from L-ornithine and carbamoyl phosphate: step 1/3. In terms of biological role, reversibly catalyzes the transfer of the carbamoyl group from carbamoyl phosphate (CP) to the N(epsilon) atom of ornithine (ORN) to produce L-citrulline. In Pelobacter propionicus (strain DSM 2379 / NBRC 103807 / OttBd1), this protein is Ornithine carbamoyltransferase.